The chain runs to 196 residues: SPRY domain-containing protein 7 (196 aa).

A2 is modified (N-acetylalanine). The region spanning 2–184 is the B30.2/SPRY domain; the sequence is AASAWCCLRC…FSEFYHTPPP (183 aa).

This Mus musculus (Mouse) protein is SPRY domain-containing protein 7 (Spryd7).